Consider the following 1786-residue polypeptide: Protein TIC 214 (1786 aa).

A run of 6 helical transmembrane segments spans residues 19 to 39 (IINS…FSIG), 68 to 88 (FIAG…HLAL), 91 to 111 (PHTI…WNNH), 133 to 153 (VFLN…SSML), 176 to 196 (VGWL…LVWI), and 227 to 247 (IFSI…PSPI). A coiled-coil region spans residues 1007-1046 (SLSEKKIKNLIDRKKTIRNQIEEISKEKQNLTNSCTKLRY).

Belongs to the TIC214 family. In terms of assembly, part of the Tic complex. Component of the 1-MD complex, composed of TIC20-I, TIC214, TIC100 and TIC56. Interacts with the translocating preproteins. Hydrolysis of ATP is essential for the formation of this complex. The 1-MD complex interacts with TIC21.

The protein localises to the plastid. It is found in the chloroplast inner membrane. Its function is as follows. Involved in protein precursor import into chloroplasts. May be part of an intermediate translocation complex acting as a protein-conducting channel at the inner envelope. The chain is Protein TIC 214 from Arabidopsis thaliana (Mouse-ear cress).